The primary structure comprises 256 residues: Trypsin, alkaline A (256 aa).

The N-terminal stretch at 1 to 17 (MRLFLALLALGFAAVAA) is a signal peptide. Residues 18-24 (VPAYPQR) constitute a propeptide, activation peptide. The Peptidase S1 domain maps to 25–256 (IVGGSTTTIQ…RFANWIRNNS (232 aa)). Residues C55 and C71 are joined by a disulfide bond. Catalysis depends on charge relay system residues H70 and D115. 2 cysteine pairs are disulfide-bonded: C180/C197 and C209/C233. S213 acts as the Charge relay system in catalysis.

This sequence belongs to the peptidase S1 family. As to expression, midgut.

The protein localises to the secreted. The protein resides in the extracellular space. The catalysed reaction is Preferential cleavage: Arg-|-Xaa, Lys-|-Xaa.. The polypeptide is Trypsin, alkaline A (Manduca sexta (Tobacco hawkmoth)).